Here is a 683-residue protein sequence, read N- to C-terminus: DNA polymerase alpha-associated DNA helicase A (683 aa).

229–236 is a binding site for ATP; that stretch reads GPPGTGKT.

Belongs to the DNA2/NAM7 helicase family. In terms of assembly, associates with the hexameric DNA polymerase alpha.

It localises to the cytoplasm. The protein localises to the nucleus. It carries out the reaction ATP + H2O = ADP + phosphate + H(+). Functionally, DNA polymerase alpha-associated DNA helicase which may be involved in DNA replication. In Saccharomyces cerevisiae (strain ATCC 204508 / S288c) (Baker's yeast), this protein is DNA polymerase alpha-associated DNA helicase A (HCS1).